Reading from the N-terminus, the 376-residue chain is Pyruvate dehydrogenase E1 component subunit beta-2, mitochondrial (376 aa).

A mitochondrion-targeting transit peptide spans 1 to 36 (MLGAARRQLGSGPMLGQVLRRLRPATAAAADAARAY). E99 serves as a coordination point for thiamine diphosphate. K(+) contacts are provided by I152, A200, I201, and D203.

In terms of assembly, tetramer of 2 alpha and 2 beta subunits. It depends on thiamine diphosphate as a cofactor.

The protein resides in the mitochondrion matrix. The enzyme catalyses N(6)-[(R)-lipoyl]-L-lysyl-[protein] + pyruvate + H(+) = N(6)-[(R)-S(8)-acetyldihydrolipoyl]-L-lysyl-[protein] + CO2. The pyruvate dehydrogenase complex catalyzes the overall conversion of pyruvate to acetyl-CoA and CO(2). It contains multiple copies of three enzymatic components: pyruvate dehydrogenase (E1), dihydrolipoamide acetyltransferase (E2) and lipoamide dehydrogenase (E3). The protein is Pyruvate dehydrogenase E1 component subunit beta-2, mitochondrial of Oryza sativa subsp. japonica (Rice).